The sequence spans 250 residues: Small ribosomal subunit protein uS2 (250 aa).

Belongs to the universal ribosomal protein uS2 family.

The chain is Small ribosomal subunit protein uS2 from Delftia acidovorans (strain DSM 14801 / SPH-1).